Reading from the N-terminus, the 542-residue chain is Peptide chain release factor 3 (542 aa).

The region spanning 14–283 (ELRRNFAIIS…YFLEYALKPG (270 aa)) is the tr-type G domain. Residues 23–30 (SHPDAGKT), 91–95 (DTPGH), and 145–148 (NKLD) each bind GTP.

Belongs to the TRAFAC class translation factor GTPase superfamily. Classic translation factor GTPase family. PrfC subfamily.

It is found in the cytoplasm. Its function is as follows. Increases the formation of ribosomal termination complexes and stimulates activities of RF-1 and RF-2. It binds guanine nucleotides and has strong preference for UGA stop codons. It may interact directly with the ribosome. The stimulation of RF-1 and RF-2 is significantly reduced by GTP and GDP, but not by GMP. The polypeptide is Peptide chain release factor 3 (Nostoc punctiforme (strain ATCC 29133 / PCC 73102)).